The chain runs to 894 residues: Microsomal triglyceride transfer protein large subunit (894 aa).

Positions 1–21 (MILLAVLFLCFFSSYSASVKG) are cleaved as a signal peptide. The 631-residue stretch at 28–658 (LNNERLYKLT…IFQYIGKAEL (631 aa)) folds into the Vitellogenin domain. Cysteine 174 and cysteine 194 are oxidised to a cystine.

In terms of assembly, interacts with PRAP1. As to quaternary structure, heterodimer; heterodimerizes with the protein disulfide isomerase (P4HB/PDI). Interacts with APOB. Heterodimer; heterodimerizes with the protein disulfide isomerase (P4HB/PDI). Post-translationally, cleaved by signal peptidase between residues Gln-33 and Asn-34. As to expression, mainly expressed in the intestine and the liver, and at lower levels in white and brown fat cells. Expressed in heart. Ubiquitous, and is the major isoform in hematopoietic cells and adipocytes.

It is found in the endoplasmic reticulum. Its subcellular location is the golgi apparatus. It carries out the reaction a 1,2-diacyl-sn-glycero-3-phosphocholine(in) = a 1,2-diacyl-sn-glycero-3-phosphocholine(out). It catalyses the reaction a 1,2-diacyl-sn-glycero-3-phosphoethanolamine(in) = a 1,2-diacyl-sn-glycero-3-phosphoethanolamine(out). The enzyme catalyses a cholesterol ester(in) = a cholesterol ester(out). The catalysed reaction is a triacyl-sn-glycerol(in) = a triacyl-sn-glycerol(out). In terms of biological role, catalyzes the transport of triglyceride, cholesteryl ester, and phospholipid between phospholipid surfaces. Required for the assembly and secretion of plasma lipoproteins that contain apolipoprotein B. May be involved in regulating cholesteryl ester biosynthesis in cells that produce lipoproteins. Its function is as follows. Critical for the development of natural killer T (NKT) cells. Required for the assembly and secretion of plasma lipoproteins that contain apolipoprotein B. This chain is Microsomal triglyceride transfer protein large subunit (Mttp), found in Mus musculus (Mouse).